A 247-amino-acid chain; its full sequence is 2,3-bisphosphoglycerate-dependent phosphoglycerate mutase (247 aa).

Substrate is bound by residues 8–15 (RHGESVWN), 21–22 (TG), R60, 87–90 (ERHY), K98, 114–115 (RR), and 183–184 (GN). H9 serves as the catalytic Tele-phosphohistidine intermediate. The active-site Proton donor/acceptor is E87.

This sequence belongs to the phosphoglycerate mutase family. BPG-dependent PGAM subfamily.

It carries out the reaction (2R)-2-phosphoglycerate = (2R)-3-phosphoglycerate. The protein operates within carbohydrate degradation; glycolysis; pyruvate from D-glyceraldehyde 3-phosphate: step 3/5. In terms of biological role, catalyzes the interconversion of 2-phosphoglycerate and 3-phosphoglycerate. This chain is 2,3-bisphosphoglycerate-dependent phosphoglycerate mutase, found in Thermobifida fusca (strain YX).